The chain runs to 506 residues: Histidine ammonia-lyase (506 aa).

The 5-imidazolinone (Ala-Gly) cross-link spans 142-144 (ASG). Serine 143 carries the post-translational modification 2,3-didehydroalanine (Ser).

Belongs to the PAL/histidase family. Contains an active site 4-methylidene-imidazol-5-one (MIO), which is formed autocatalytically by cyclization and dehydration of residues Ala-Ser-Gly.

It localises to the cytoplasm. It catalyses the reaction L-histidine = trans-urocanate + NH4(+). It participates in amino-acid degradation; L-histidine degradation into L-glutamate; N-formimidoyl-L-glutamate from L-histidine: step 1/3. The polypeptide is Histidine ammonia-lyase (Bacillus cereus (strain ATCC 14579 / DSM 31 / CCUG 7414 / JCM 2152 / NBRC 15305 / NCIMB 9373 / NCTC 2599 / NRRL B-3711)).